The following is a 177-amino-acid chain: Large ribosomal subunit protein uL10 (177 aa).

The protein belongs to the universal ribosomal protein uL10 family. As to quaternary structure, part of the ribosomal stalk of the 50S ribosomal subunit. The N-terminus interacts with L11 and the large rRNA to form the base of the stalk. The C-terminus forms an elongated spine to which L12 dimers bind in a sequential fashion forming a multimeric L10(L12)X complex.

Forms part of the ribosomal stalk, playing a central role in the interaction of the ribosome with GTP-bound translation factors. In Kocuria rhizophila (strain ATCC 9341 / DSM 348 / NBRC 103217 / DC2201), this protein is Large ribosomal subunit protein uL10.